We begin with the raw amino-acid sequence, 125 residues long: Bublin coiled-coil protein (125 aa).

The stretch at 46 to 95 forms a coiled coil; the sequence is IRKLDTQLDHLNDYMSKMEERLKAHNDRMMETLKQQKEEREKRRRSFHER. Residues 79–125 form a disordered region; it reads KQQKEEREKRRRSFHERMSQNQSEDEEFKKQMSSILKRVQSVKRTEK.

As to expression, expressed in many epithelial tissues, including the pharynx, intestine, excretory canal and hypodermis.

Its subcellular location is the cell junction. It localises to the cytoplasm. It is found in the cytoskeleton. Functionally, dynamic component of the endotube in intestinal cells, interacts with intermediate filament and regulates intestinal lumen morphology. This is Bublin coiled-coil protein from Caenorhabditis elegans.